The chain runs to 560 residues: Bifunctional NAD(P)H-hydrate repair enzyme (560 aa).

The NAD(P)H-hydrate epimerase stretch occupies residues 1–241 (MLSRLSERCS…WMTAPERMRA (241 aa)). Residues 29–235 (LRDAEPAAAA…SLGLEDWMTA (207 aa)) enclose the YjeF N-terminal domain. Residues 77–81 (NNGGD) form an NADPHX 1; for epimerase activity region. K(+) is bound by residues N78 and D145. The interval 149–155 (GTGICGP) is NADPHX 1; for epimerase activity. The (6S)-NADPHX site is built by Y160 and D178. Residue S181 participates in K(+) binding. In terms of domain architecture, YjeF C-terminal spans 249 to 547 (LDDVYEYFGI…HRVPLIVNAS (299 aa)). The interval 249-560 (LDDVYEYFGI…PATRQRSSGP (312 aa)) is ADP-dependent (S)-NAD(P)H-hydrate dehydratase. Residue G351 coordinates (6S)-NADPHX. The interval 417-423 (HPGEAAR) is NADPHX 2; for dehydratase activity. ADP contacts are provided by residues 454–458 (KGPGT) and 475–484 (NAGMASGGMG). D485 lines the (6S)-NADPHX pocket.

This sequence in the N-terminal section; belongs to the NnrE/AIBP family. It in the C-terminal section; belongs to the NnrD/CARKD family. Requires K(+) as cofactor.

It carries out the reaction (6S)-NADHX + ADP = AMP + phosphate + NADH + H(+). The enzyme catalyses (6S)-NADPHX + ADP = AMP + phosphate + NADPH + H(+). The catalysed reaction is (6R)-NADHX = (6S)-NADHX. It catalyses the reaction (6R)-NADPHX = (6S)-NADPHX. Functionally, bifunctional enzyme that catalyzes the epimerization of the S- and R-forms of NAD(P)HX and the dehydration of the S-form of NAD(P)HX at the expense of ADP, which is converted to AMP. This allows the repair of both epimers of NAD(P)HX, a damaged form of NAD(P)H that is a result of enzymatic or heat-dependent hydration. The protein is Bifunctional NAD(P)H-hydrate repair enzyme of Leishmania infantum.